A 207-amino-acid polypeptide reads, in one-letter code: Large ribosomal subunit protein bL25 (207 aa).

Belongs to the bacterial ribosomal protein bL25 family. CTC subfamily. As to quaternary structure, part of the 50S ribosomal subunit; part of the 5S rRNA/L5/L18/L25 subcomplex. Contacts the 5S rRNA. Binds to the 5S rRNA independently of L5 and L18.

In terms of biological role, this is one of the proteins that binds to the 5S RNA in the ribosome where it forms part of the central protuberance. This is Large ribosomal subunit protein bL25 from Brucella abortus (strain S19).